Consider the following 200-residue polypeptide: High frequency lysogenization protein HflD homolog (200 aa).

This sequence belongs to the HflD family.

The protein resides in the cytoplasm. Its subcellular location is the cell inner membrane. This Pseudoalteromonas translucida (strain TAC 125) protein is High frequency lysogenization protein HflD homolog.